The following is a 343-amino-acid chain: KRR1 small subunit processome component homolog (343 aa).

Residues 125 to 193 (DIIKIGNLVH…VRDIVVETMN (69 aa)) enclose the KH domain. Residues 232–245 (NISKRKQPKVKKAK) show a composition bias toward basic residues. The tract at residues 232-343 (NISKRKQPKV…KLLKANKKKV (112 aa)) is disordered. Residues 270-302 (FLNKEQKQAKRQQERSAKQADAAKRQDERRNKD) are a coiled coil. Over residues 271–302 (LNKEQKQAKRQQERSAKQADAAKRQDERRNKD) the composition is skewed to basic and acidic residues. Positions 331–343 (LKAKLLKANKKKV) are enriched in basic residues.

It belongs to the KRR1 family. As to quaternary structure, monomer. Component of the ribosomal small subunit (SSU) processome.

Its subcellular location is the nucleus. It is found in the nucleolus. Its function is as follows. Required for 40S ribosome biogenesis. Involved in nucleolar processing of pre-18S ribosomal RNA and ribosome assembly. Binds to RNA. Required for female germline development, cell viability during eye development and for survival of dividing cells and epithelial cells during early wing disk development. This Drosophila ananassae (Fruit fly) protein is KRR1 small subunit processome component homolog.